A 319-amino-acid chain; its full sequence is Solute carrier family 25 member 34 (319 aa).

A disordered region spans residues Met1–Leu22. Pro residues predominate over residues Ser10 to Leu22. 3 Solcar repeats span residues Leu22–Ala115, Asp119–Trp212, and Leu222–Arg313. A run of 6 helical transmembrane segments spans residues Pro25–Leu45, Ser63–Gly83, Gly116–Ile138, Val188–Ala209, Ser224–Pro244, and Leu296–His319.

Belongs to the mitochondrial carrier (TC 2.A.29) family.

The protein resides in the mitochondrion inner membrane. The sequence is that of Solute carrier family 25 member 34 (slc25a34) from Danio rerio (Zebrafish).